The sequence spans 217 residues: Thymidylate kinase (217 aa).

Residue 12 to 19 (GIDGSGKS) participates in ATP binding.

It belongs to the thymidylate kinase family.

The catalysed reaction is dTMP + ATP = dTDP + ADP. Its function is as follows. Phosphorylation of dTMP to form dTDP in both de novo and salvage pathways of dTTP synthesis. This chain is Thymidylate kinase, found in Cereibacter sphaeroides (strain ATCC 17023 / DSM 158 / JCM 6121 / CCUG 31486 / LMG 2827 / NBRC 12203 / NCIMB 8253 / ATH 2.4.1.) (Rhodobacter sphaeroides).